We begin with the raw amino-acid sequence, 549 residues long: Oxygen-dependent choline dehydrogenase (549 aa).

4–33 (DFVIIGSGSAGSAMASRLSEDGKHTVIVLE) is a binding site for FAD. The active-site Proton acceptor is His465.

It belongs to the GMC oxidoreductase family. FAD serves as cofactor.

The catalysed reaction is choline + A = betaine aldehyde + AH2. It catalyses the reaction betaine aldehyde + NAD(+) + H2O = glycine betaine + NADH + 2 H(+). Its pathway is amine and polyamine biosynthesis; betaine biosynthesis via choline pathway; betaine aldehyde from choline (cytochrome c reductase route): step 1/1. In terms of biological role, involved in the biosynthesis of the osmoprotectant glycine betaine. Catalyzes the oxidation of choline to betaine aldehyde and betaine aldehyde to glycine betaine at the same rate. The sequence is that of Oxygen-dependent choline dehydrogenase from Rhizobium rhizogenes (strain K84 / ATCC BAA-868) (Agrobacterium radiobacter).